A 163-amino-acid polypeptide reads, in one-letter code: Lysosomal enzyme trafficking factor (163 aa).

2 helical membrane passes run 40–60 (MGWI…YYVF) and 98–118 (LPFW…FLFL).

This sequence belongs to the LYSET family. In terms of assembly, interacts with GNPTAB; this interaction is important for proper localization of GNPTAB in Golgi stacks. Interacts with MBTPS1.

The protein resides in the golgi apparatus membrane. Functionally, required for mannose-6-phosphate-dependent trafficking of lysosomal enzymes. LYSET bridges GlcNAc-1-phosphate transferase (GNPTAB), to the membrane-bound transcription factor site-1 protease (MBTPS1), thus allowing proteolytic activation of the GNPTAB. GNPTAB is involved in the regulation of M6P-dependent Golgi-to-lysosome trafficking of lysosomal enzymes. LYSET is thus an essential factor for maturation and delivery of lysosomal hydrolases. Plays an essential function for cells that depend on lysosomal catabolism to generate nutrients. The sequence is that of Lysosomal enzyme trafficking factor (Lyset) from Mus musculus (Mouse).